Consider the following 433-residue polypeptide: Lipase 2 (433 aa).

An Involved in the stabilization of the negatively charged intermediate by the formation of the oxyanion hole motif is present at residues 165–167 (HGG). Serine 239 functions as the Charge relay system in the catalytic mechanism. Residues aspartate 361 and histidine 391 contribute to the active site.

It belongs to the 'GDXG' lipolytic enzyme family.

It catalyses the reaction a triacylglycerol + H2O = a diacylglycerol + a fatty acid + H(+). The chain is Lipase 2 (lip2) from Moraxella sp. (strain TA144).